Here is an 84-residue protein sequence, read N- to C-terminus: Figainin 2 (84 aa).

The signal sequence occupies residues 1–22; the sequence is MAFLKKSLFLVLFLGIVSLSVC. A compositionally biased stretch (basic and acidic residues) spans 23–39; the sequence is EEEKREGEEKEEKREEE. Residues 23–53 form a disordered region; the sequence is EEEKREGEEKEEKREEEEGKEENEDGNEEHK. Residues 23–54 constitute a propeptide that is removed on maturation; sequence EEEKREGEEKEEKREEEEGKEENEDGNEEHKE. Over residues 40–49 the composition is skewed to acidic residues; it reads EGKEENEDGN.

Expressed by the skin glands.

It localises to the secreted. Functionally, antimicrobial peptide that displays antibacterial, antiprotozoal, and antiviral activity. Exhibits antibacterial activity against the Gram-positive bacteria S.epidermidis ATCC 12228 (MIC=4 uM), E.casseliflavus ATCC 700327 (MIC=4 uM), S.aureus ATCC 25923 (MIC=8 uM) and E.faecalis ATCC 29212 (MIC=8 uM), and the Gram-negative bacteria E.coli ATCC 25922 (MIC=8 uM), K.pneumoniae ATCC 13883 (MIC=8 uM), the multi-resistant clinical isolate strain K.pneumoniae carbapanemase (KPC) MR (MIC=16 uM), and P.aeruginosa ATCC 27853 (MIC=32 uM). Displays antiprotozoal activity against the epimastigote form of T.cruzi (IC(50)=6.32 uM). Does not show antimicrobial against the fungi C.albicans ATCC 90028 and C.parapsilosis ATCC 22019. Displays antiviral activity against the human viruses chikungunya (EC(50)=17.9 uM), Dengue serotype 4 (EC(50)=20.8 uM) and Yellow Fever (EC(50)=21.8 uM). Shows moderate cytolytic activity against human erythrocytes (HC(50)=48.9 uM), and activates the oxidative burst in human neutrophils. Also displays anti-proliferative effects against MCF-7 breast cancer cells (IC(50)=15.3 uM) and B16F10 murine melanoma cells (IC(50)=12.8 uM). This Boana raniceps (Chaco tree frog) protein is Figainin 2.